Consider the following 401-residue polypeptide: Probable plasmid-partitioning protein ParB (401 aa).

The interval 232 to 272 (KTRGKENARDKAAAVKEEVKPSKKPKADNGEKTPKGRSHEE) is disordered.

It belongs to the ParB family.

This Xylella fastidiosa (strain 9a5c) protein is Probable plasmid-partitioning protein ParB.